The sequence spans 440 residues: Muscarinic acetylcholine receptor M2 (440 aa).

A helical transmembrane segment spans residues 1-19 (VLVAGSLSLVTIIGNILVM). Residues 20–33 (VSIKVNRHLQTVNN) are Cytoplasmic-facing. The chain crosses the membrane as a helical span at residues 34–54 (YFLFSLACADLIIGVFSMNLY). Topologically, residues 55–71 (TLYTVIGYWPLGPVVCD) are extracellular. An intrachain disulfide couples cysteine 70 to cysteine 150. Residues 72-93 (LWLALDYVVSNASVMNLLIISF) traverse the membrane as a helical segment. The short motif at 94-96 (DRY) is the Important for signaling element. Residues 94–113 (DRYFCVTKPLTYPVKRTTKM) are Cytoplasmic-facing. A helical membrane pass occupies residues 114-136 (AGMMIAAAWVLSFILWAPAILFW). The Extracellular portion of the chain corresponds to 137-158 (QFIVGVRTVEDGECYIQFFSNA). The helical transmembrane segment at 159-183 (AVTFGTAIAAFYLPVIIMTVLYWHI) threads the bilayer. Residues 184–361 (SRASKSRIKK…PPSREKKVTR (178 aa)) are Cytoplasmic-facing. The tract at residues 192–329 (KKDKKEPVAN…VVGSSGQNGD (138 aa)) is disordered. Serine 206 bears the Phosphoserine mark. Basic and acidic residues predominate over residues 228–244 (GLEHNKIQNGKAPRDPV). 3 stretches are compositionally biased toward polar residues: residues 258-267 (NDSTSVSAVA), 278-287 (DENTVSTSLG), and 308-327 (SDSC…SGQN). The chain crosses the membrane as a helical span at residues 362 to 384 (TILAILLAFIITWAPYNVMVLIN). Over 385 to 392 (TFCAPCIP) the chain is Extracellular. Cysteine 387 and cysteine 390 are oxidised to a cystine. A helical membrane pass occupies residues 393 to 416 (NTVWTIGYWLCYINSTINPACYAL). An Important for signaling motif is present at residues 410-414 (NPACY). The Cytoplasmic portion of the chain corresponds to 417 to 440 (CNATFKKTFKHLLMCHYKNIGATR). Phosphothreonine is present on residues threonine 420, threonine 424, and threonine 439.

This sequence belongs to the G-protein coupled receptor 1 family. Muscarinic acetylcholine receptor subfamily. CHRM2 sub-subfamily. As to quaternary structure, interacts with ARRB1 and ARRB2. Interacts with RACK1; the interaction regulates CHRM2 internalization. Phosphorylated in response to agonist treatment.

It is found in the cell membrane. The protein localises to the postsynaptic cell membrane. Its function is as follows. The muscarinic acetylcholine receptor mediates various cellular responses, including inhibition of adenylate cyclase, breakdown of phosphoinositides and modulation of potassium channels through the action of G proteins. Primary transducing effect is adenylate cyclase inhibition. Signaling promotes phospholipase C activity, leading to the release of inositol trisphosphate (IP3); this then triggers calcium ion release into the cytosol. This is Muscarinic acetylcholine receptor M2 (CHRM2) from Pan troglodytes (Chimpanzee).